Consider the following 353-residue polypeptide: Inactive ubiquitin thioesterase OTULINL (353 aa).

Residues 1–80 (MKATRSAPRE…KWWIGYLQRK (80 aa)) form a required for membrane binding region. The 229-residue stretch at 125-353 (KCVRPVKRDN…NDHQYHIPVF (229 aa)) folds into the OTU domain.

This sequence belongs to the peptidase C65 family. Otulin subfamily. As to quaternary structure, does not bind ubiquitin or ubiquitin-like proteins.

Its subcellular location is the cytoplasm. The protein resides in the endoplasmic reticulum membrane. It localises to the nucleus envelope. In terms of biological role, lacks deubiquitinase activity. This is Inactive ubiquitin thioesterase OTULINL from Rattus norvegicus (Rat).